The following is a 164-amino-acid chain: Putative 4-hydroxy-4-methyl-2-oxoglutarate aldolase (164 aa).

Substrate contacts are provided by residues Gly79–Leu82 and Arg101. Residue Asp102 coordinates a divalent metal cation.

It belongs to the class II aldolase/RraA-like family. Homotrimer. A divalent metal cation serves as cofactor.

It catalyses the reaction 4-hydroxy-4-methyl-2-oxoglutarate = 2 pyruvate. It carries out the reaction oxaloacetate + H(+) = pyruvate + CO2. Catalyzes the aldol cleavage of 4-hydroxy-4-methyl-2-oxoglutarate (HMG) into 2 molecules of pyruvate. Also contains a secondary oxaloacetate (OAA) decarboxylase activity due to the common pyruvate enolate transition state formed following C-C bond cleavage in the retro-aldol and decarboxylation reactions. This is Putative 4-hydroxy-4-methyl-2-oxoglutarate aldolase from Halorhodospira halophila (strain DSM 244 / SL1) (Ectothiorhodospira halophila (strain DSM 244 / SL1)).